The sequence spans 2185 residues: Genome polyprotein (2185 aa).

Gly-2 is lipidated: N-myristoyl glycine; by host. Over 2-1495 (GAQVSTQKTG…HVSRAFICLQ (1494 aa)) the chain is Cytoplasmic. An amphipathic alpha-helix region spans residues 568-584 (FFQGPVEDAITAAIGRV). Catalysis depends on for protease 2A activity residues His-872 and Asp-890. 2 residues coordinate Zn(2+): Cys-907 and Cys-909. Cys-961 functions as the For protease 2A activity in the catalytic mechanism. Zn(2+) is bound by residues Cys-967 and His-969. The membrane-binding stretch occupies residues 1101 to 1173 (NNGWLKKFTE…EQSAPSQSDQ (73 aa)). The oligomerization stretch occupies residues 1101 to 1239 (NNGWLKKFTE…SPGAGKSVAT (139 aa)). Residues 1122–1126 (AIKIQ) form an RNA-binding region. One can recognise an SF3 helicase domain in the interval 1205 to 1361 (EKKMSNYIQF…SMYSQNGKIN (157 aa)). Positions 1369, 1381, and 1386 each coordinate Zn(2+). The C4-type; degenerate zinc-finger motif lies at 1369-1386 (CDEECCPVNFKKCCPLVC). Residues 1413–1420 (EYNHRHSV) form an RNA-binding region. An oligomerization region spans residues 1424–1429 (LEALFQ). Residues 1496–1511 (AITTFVSVAGIIYIIY) lie within the membrane without spanning it. Topologically, residues 1512-2185 (KLFAGFQGAY…TIRRKWLDSF (674 aa)) are cytoplasmic. The residue at position 1521 (Tyr-1521) is an O-(5'-phospho-RNA)-tyrosine. In terms of domain architecture, Peptidase C3 spans 1541–1719 (GPAFEFAVAM…FSAALLKHYF (179 aa)). Residues His-1580, Glu-1611, and Cys-1687 each act as for protease 3C activity in the active site. In terms of domain architecture, RdRp catalytic spans 1950–2066 (GHLIAFDYSG…SYPWPIDASL (117 aa)). The Mg(2+) site is built by Asp-1956 and Asp-2052.

The protein belongs to the picornaviruses polyprotein family. As to quaternary structure, interacts with capsid protein VP1 and capsid protein VP3 to form heterotrimeric protomers. In terms of assembly, interacts with capsid protein VP0, and capsid protein VP3 to form heterotrimeric protomers. Five protomers subsequently associate to form pentamers which serve as building blocks for the capsid. Interacts with capsid protein VP2, capsid protein VP3 and capsid protein VP4 following cleavage of capsid protein VP0. Interacts with host CD55. Interacts with host CXADR. Interacts with capsid protein VP1 and capsid protein VP3 in the mature capsid. As to quaternary structure, interacts with capsid protein VP0 and capsid protein VP1 to form heterotrimeric protomers. Five protomers subsequently associate to form pentamers which serve as building blocks for the capsid. Interacts with capsid protein VP4 in the mature capsid. Interacts with protein 2C; this interaction may be important for virion morphogenesis. In terms of assembly, interacts with capsid protein VP1 and capsid protein VP3. Homodimer. As to quaternary structure, homohexamer; forms a hexameric ring structure with 6-fold symmetry characteristic of AAA+ ATPases. Interacts (via N-terminus) with host RTN3 (via reticulon domain); this interaction is important for viral replication. Interacts with capsid protein VP3; this interaction may be important for virion morphogenesis. In terms of assembly, interacts with protein 3CD. Homodimer. Interacts with host GBF1. Interacts (via GOLD domain) with host ACBD3 (via GOLD domain); this interaction allows the formation of a viral protein 3A/ACBD3 heterotetramer with a 2:2 stoichiometry, which will stimulate the recruitment of host PI4KB in order to synthesize PI4P at the viral RNA replication sites. As to quaternary structure, interacts with RNA-directed RNA polymerase. In terms of assembly, interacts with host TICAM1 (via C-terminus). Interacts with protein 3AB and with RNA-directed RNA polymerase. As to quaternary structure, interacts with Viral protein genome-linked and with protein 3CD. Mg(2+) serves as cofactor. Post-translationally, specific enzymatic cleavages in vivo by the viral proteases yield processing intermediates and the mature proteins. Myristoylation is required for the formation of pentamers during virus assembly. Further assembly of 12 pentamers and a molecule of genomic RNA generates the provirion. In terms of processing, during virion maturation, immature virions are rendered infectious following cleavage of VP0 into VP4 and VP2. This maturation seems to be an autocatalytic event triggered by the presence of RNA in the capsid and it is followed by a conformational change infectious virion. Post-translationally, myristoylation is required during RNA encapsidation and formation of the mature virus particle. VPg is uridylylated by the polymerase into VPg-pUpU. This acts as a nucleotide-peptide primer for the genomic RNA replication.

It is found in the virion. The protein resides in the host cytoplasm. The protein localises to the host cytoplasmic vesicle membrane. It localises to the host nucleus. The enzyme catalyses a ribonucleoside 5'-triphosphate + H2O = a ribonucleoside 5'-diphosphate + phosphate + H(+). The catalysed reaction is Selective cleavage of Tyr-|-Gly bond in the picornavirus polyprotein.. It catalyses the reaction RNA(n) + a ribonucleoside 5'-triphosphate = RNA(n+1) + diphosphate. It carries out the reaction Selective cleavage of Gln-|-Gly bond in the poliovirus polyprotein. In other picornavirus reactions Glu may be substituted for Gln, and Ser or Thr for Gly.. Replication or transcription is subject to high level of random mutations by the nucleotide analog ribavirin. Its function is as follows. Forms an icosahedral capsid of pseudo T=3 symmetry with capsid proteins VP2 and VP3. The capsid is 300 Angstroms in diameter, composed of 60 copies of each capsid protein and enclosing the viral positive strand RNA genome. Capsid protein VP1 mainly forms the vertices of the capsid. Capsid protein VP1 interacts with host cell receptors CD55 and CXADR to provide virion attachment to target host cells. This attachment induces virion internalization. Tyrosine kinases are probably involved in the entry process. After binding to its receptor, the capsid undergoes conformational changes. Capsid protein VP1 N-terminus (that contains an amphipathic alpha-helix) and capsid protein VP4 are externalized. Together, they shape a pore in the host membrane through which viral genome is translocated to host cell cytoplasm. Functionally, forms an icosahedral capsid of pseudo T=3 symmetry with capsid proteins VP2 and VP3. The capsid is 300 Angstroms in diameter, composed of 60 copies of each capsid protein and enclosing the viral positive strand RNA genome. In terms of biological role, lies on the inner surface of the capsid shell. After binding to the host receptor, the capsid undergoes conformational changes. Capsid protein VP4 is released, Capsid protein VP1 N-terminus is externalized, and together, they shape a pore in the host membrane through which the viral genome is translocated into the host cell cytoplasm. Component of immature procapsids, which is cleaved into capsid proteins VP4 and VP2 after maturation. Allows the capsid to remain inactive before the maturation step. Its function is as follows. Cysteine protease that cleaves viral polyprotein and specific host proteins. It is responsible for the autocatalytic cleavage between the P1 and P2 regions, which is the first cleavage occurring in the polyprotein. Also cleaves the host translation initiation factor EIF4G1, in order to shut down the capped cellular mRNA translation. Inhibits the host nucleus-cytoplasm protein and RNA trafficking by cleaving host members of the nuclear pores. Counteracts stress granule formation probably by antagonizing its assembly or promoting its dissassembly. Cleaves and inhibits host IFIH1/MDA5, thereby inhibiting the type-I IFN production and the establishment of the antiviral state. Cleaves and inhibits host MAVS, thereby inhibiting the type-I IFN production and the establishment of the antiviral state. Functionally, plays an essential role in the virus replication cycle by acting as a viroporin. Creates a pore in the host endoplasmic reticulum and as a consequence releases Ca2+ in the cytoplasm of infected cell. In turn, high levels of cytoplasmic calcium may trigger membrane trafficking and transport of viral ER-associated proteins to viroplasms, sites of viral genome replication. In terms of biological role, induces and associates with structural rearrangements of intracellular membranes. Displays RNA-binding, nucleotide binding and NTPase activities. May play a role in virion morphogenesis and viral RNA encapsidation by interacting with the capsid protein VP3. Localizes the viral replication complex to the surface of membranous vesicles. Together with protein 3CD binds the Cis-Active RNA Element (CRE) which is involved in RNA synthesis initiation. Acts as a cofactor to stimulate the activity of 3D polymerase, maybe through a nucleid acid chaperone activity. Its function is as follows. Localizes the viral replication complex to the surface of membranous vesicles. It inhibits host cell endoplasmic reticulum-to-Golgi apparatus transport and causes the disassembly of the Golgi complex, possibly through GBF1 interaction. This would result in depletion of MHC, trail receptors and IFN receptors at the host cell surface. Plays an essential role in viral RNA replication by recruiting ACBD3 and PI4KB at the viral replication sites, thereby allowing the formation of the rearranged membranous structures where viral replication takes place. Functionally, acts as a primer for viral RNA replication and remains covalently bound to viral genomic RNA. VPg is uridylylated prior to priming replication into VPg-pUpU. The oriI viral genomic sequence may act as a template for this. The VPg-pUpU is then used as primer on the genomic RNA poly(A) by the RNA-dependent RNA polymerase to replicate the viral genome. During genome replication, the VPg-RNA linkage is removed by the host TDP2, thereby accelerating replication. During the late stage of the replication cycle, host TDP2 is excluded from sites of viral RNA synthesis and encapsidation, allowing for the generation of progeny virions. In terms of biological role, involved in the viral replication complex and viral polypeptide maturation. It exhibits protease activity with a specificity and catalytic efficiency that is different from protease 3C. Protein 3CD lacks polymerase activity. Protein 3CD binds to the 5'UTR of the viral genome. Major viral protease that mediates proteolytic processing of the polyprotein. Cleaves host EIF5B, contributing to host translation shutoff. Also cleaves host PABPC1, contributing to host translation shutoff. Cleaves and inhibits host RIGI, thereby inhibiting the type-I IFN production and the establishment of the antiviral state. Cleaves and inhibits host MAVS, thereby inhibiting the type-I IFN production and the establishment of the antiviral state. Cleaves and inhibits host TICAM1/TRIF, thereby inhibiting the type-I IFN production. Cleaves host NLRP1, triggers host N-glycine-mediated degradation of the autoinhibitory NLRP1 N-terminal fragment. Its function is as follows. Replicates the viral genomic RNA on the surface of intracellular membranes. May form linear arrays of subunits that propagate along a strong head-to-tail interaction called interface-I. Covalently attaches UMP to a tyrosine of VPg, which is used to prime RNA synthesis. The positive stranded RNA genome is first replicated at virus induced membranous vesicles, creating a dsRNA genomic replication form. This dsRNA is then used as template to synthesize positive stranded RNA genomes. ss(+)RNA genomes are either translated, replicated or encapsidated. The protein is Genome polyprotein of Homo sapiens (Human).